Consider the following 246-residue polypeptide: MEFNKAQNIIGLRVLNDNVIWLWVKDKSVVVIDPSVHEPVIRYIDENNLHLKAILQTHHHSDHIGGTKPLIERWQNVKVIASSKEKKRIPFQNVSVEDGETLNILGEEVKIIEVLGHTSSHIAFFLNGENPVLFIGDTLFSGGCGRIFEGTYQQMYSSLERIKSLPKDTLIYCAHEYTKSNILWALNLKPKDQDLKNKLSEVEKKLSLNKLTIPFLLDEEMKINLFLRAKNLEEFTFLRANKDLWV.

Residues histidine 58, histidine 60, aspartate 62, histidine 63, histidine 117, aspartate 137, and histidine 175 each coordinate Zn(2+).

It belongs to the metallo-beta-lactamase superfamily. Glyoxalase II family. As to quaternary structure, monomer. It depends on Zn(2+) as a cofactor.

It catalyses the reaction an S-(2-hydroxyacyl)glutathione + H2O = a 2-hydroxy carboxylate + glutathione + H(+). The protein operates within secondary metabolite metabolism; methylglyoxal degradation; (R)-lactate from methylglyoxal: step 2/2. Functionally, thiolesterase that catalyzes the hydrolysis of S-D-lactoyl-glutathione to form glutathione and D-lactic acid. In Prochlorococcus marinus (strain MIT 9301), this protein is Hydroxyacylglutathione hydrolase.